A 323-amino-acid chain; its full sequence is Malate dehydrogenase (323 aa).

11–17 (GAAGQIA) lines the NAD(+) pocket. Substrate contacts are provided by Arg-92 and Arg-98. NAD(+) is bound by residues Asn-105, Gln-112, and 129–131 (VGN). Residues Asn-131 and Arg-162 each coordinate substrate. His-187 acts as the Proton acceptor in catalysis.

This sequence belongs to the LDH/MDH superfamily. MDH type 2 family.

The catalysed reaction is (S)-malate + NAD(+) = oxaloacetate + NADH + H(+). Functionally, catalyzes the reversible oxidation of malate to oxaloacetate. This is Malate dehydrogenase from Corynebacterium efficiens (strain DSM 44549 / YS-314 / AJ 12310 / JCM 11189 / NBRC 100395).